An 89-amino-acid chain; its full sequence is Sugar transporter SemiSWEET (89 aa).

3 consecutive transmembrane segments (helical) span residues 4-27 (ILLT…IKTI), 35-55 (ISVV…AYGI), and 60-82 (FAVL…ITLI). Positions 7–59 (TGLFAAFFTTFAFAPQSIKTIRTRNTEGISVVMYIMFLTGVISWIAYGIMRSD) constitute a PQ-loop domain.

As to quaternary structure, homodimer.

The protein resides in the cell membrane. The homodimer mediates transmembrane sugar transport down a concentration gradient. Transport is probably effected by rocking-type movements, where a cargo-binding cavity opens first on one and then on the other side of the membrane. The sequence is that of Sugar transporter SemiSWEET from Escherichia coli (strain UMEA 3162-1).